Here is a 1087-residue protein sequence, read N- to C-terminus: MADPVQSLAQLEILCKQLYETTDTSTRLQAEKALVEFTNSPECLSKCQLLLERGSSSYSQLLAATCLTKLVSRSTNPLPLEQRIDIRNYVLTYLATRPKLASFVTQALIQLYARITKLGWFDSQKDDFVFRNVIGDVTRFLQDSVEYCVIGVSFLSQLTNEINQADATHPLTKHRKIASSFRDSALFDIFTLSCNLLKQASGKSLLLSDESQHDLLMQLLKLTHNCLNFDFIGTSTDESSDDLCTVQIPTSWRSAFLDSSTLQLFFDLYHSIPPNFTPLVLSCLVQIASVRRSLFNNAERAKFLSHLVDGVKRILENPQSLSDPNNYHEFCRLLARLKSNYQLGELVKVENYPEVIRLIANFTVTSLQHWEFAPNSVHYLLSLWQRLAASVPYVKATEPHLLETYTPEVTKSYVTSRLESVHIILRDGLEDPLEDAGLVQQQLDQLSTIGRCEYDKTCALLVQLFDQSAQTYQELLQSGSAPSMELAVQEGRLTWLVYIIGAVIGGRVSFASTDEQDAMDGELVCRVLQLMNLTDSRLAQAGNEKLELSMLSFFEQFRKIYIGDQVQKSSKLYRRLSDVLGLNDETMVLSIFIGKIITNLKYWGRCEPITSKTLQLLNDLSIGYSSVRKLVKLSAVQFMLNNHTSEHFSFLGINSQSNMSDMRCRTTFYTALGRLLMVDLGEDEEQFSQFMMPLTAAFESLAQMFNSNNFNEQEAKRSLVGLVRDLRGIAFAFNAKSSFMMLFDWIYPAYMPILQRAIELWFHDPACTTPILKLMAELVHNRSQRLQFDVSSPNGILLFRETSKMITTYGNRILTLGELPKEQLYVLKLKGISICFSVLKAALSGNYVNFGVFRLYGDEALDNALQTFVKLLLSVPHSDLLDYPKLSQSYYSLLEVLTQDHMSFIASLEPHVIMYILSSISEGLTALDTMVCTGCCSCLDHIVTYLFKQLSRSGKKRGAPPPQESERFLHIMQQHPEMIQQMLSTVLNIIIFEDCRNQWSMSRPLLGLILLNEKYFSDLRSSIVSSQPPEKQQAMHLCFENLMEGIEGNLLTKNRDRFTQNLSAFRREVNDSMKNSSCGPNSNEMMS.

Positions Ala-30–Thr-96 constitute an Importin N-terminal domain.

The protein belongs to the exportin family.

The protein resides in the cytoplasm. It is found in the nucleus. Its function is as follows. Mediates the nuclear export of proteins (cargos) with broad substrate specificity. The chain is Exportin-7-B (xpo7-b) from Xenopus laevis (African clawed frog).